Consider the following 229-residue polypeptide: MKGLVQFLVAKIILLVLASTFVHCYDPNPLQDYCVATNGTNRVFVNGKFCKDPKLVTANDFFYSGLNIPGNTSNRLGASVTDVDVRRIPGLNTLGIAIARLDFAPGGQLPPHIHPRASQIILVLKGQLSVGFVSSNDYNYTLFSKILYPGDVFAFPIGLVQFHANTGKTHAVAIGVVGSQDPGVIPIGDAVFGSNPLIDPKLLAKAFALDVNIVRHVQRVFSSEGYIVK.

An N-terminal signal peptide occupies residues 1–24; that stretch reads MKGLVQFLVAKIILLVLASTFVHC. A disulfide bridge connects residues Cys-34 and Cys-50. 2 N-linked (GlcNAc...) asparagine glycosylation sites follow: Asn-38 and Asn-71. The region spanning 64-215 is the Cupin type-1 domain; the sequence is SGLNIPGNTS…AFALDVNIVR (152 aa). 2 residues coordinate Mn(2+): His-112 and His-114. An N-linked (GlcNAc...) asparagine glycan is attached at Asn-139. His-163 provides a ligand contact to Mn(2+).

Belongs to the germin family. In terms of assembly, oligomer (believed to be a pentamer but probably hexamer).

The protein localises to the secreted. It is found in the extracellular space. The protein resides in the apoplast. Its function is as follows. May play a role in plant defense. Probably has no oxalate oxidase activity even if the active site is conserved. In Arabidopsis thaliana (Mouse-ear cress), this protein is Putative germin-like protein subfamily 1 member 2.